A 182-amino-acid chain; its full sequence is Ribosome maturation factor RimM (182 aa).

In terms of domain architecture, PRC barrel spans 102-182 (EEGDYYWKDL…TIEVDWDPGF (81 aa)).

Belongs to the RimM family. As to quaternary structure, binds ribosomal protein uS19.

It is found in the cytoplasm. An accessory protein needed during the final step in the assembly of 30S ribosomal subunit, possibly for assembly of the head region. Essential for efficient processing of 16S rRNA. May be needed both before and after RbfA during the maturation of 16S rRNA. It has affinity for free ribosomal 30S subunits but not for 70S ribosomes. The chain is Ribosome maturation factor RimM from Salmonella gallinarum (strain 287/91 / NCTC 13346).